A 356-amino-acid polypeptide reads, in one-letter code: MRFDLERPLQSAAAHRVAVLLINLGTPDAPTPRAVRRYLAQFLSDPRVVEIPSLVWQIILRLFILPFRGVASAKKYASVWMPEGSPLRVHTQKQVEGLRHLLHLNDYTVIVEYAMRYGTPDIPAMLNQLKLAGAERILLMPMYPQYSASTTATAFDAAFVALRRMRNQPEIRTVRQYADHPAYIAALAAQVNHYWHAHGRPDFAAGDKLVLSFHGVPKRTLDLGDPYHDQCQQTATLLMHALGLTSVECRVTFQSRFGKAEWLQPYTAPTLKELGAAGVHRADVFCPGFTADCLETIEEIGMEVRDEFLHAGGKVFHAIPCLNAAPAWIAALGEIVAQHLQGWPVQAATPQSASVA.

The Fe cation site is built by His-214 and Glu-295.

The protein belongs to the ferrochelatase family.

It is found in the cytoplasm. It catalyses the reaction heme b + 2 H(+) = protoporphyrin IX + Fe(2+). It participates in porphyrin-containing compound metabolism; protoheme biosynthesis; protoheme from protoporphyrin-IX: step 1/1. Its function is as follows. Catalyzes the ferrous insertion into protoporphyrin IX. The protein is Ferrochelatase of Paraburkholderia phymatum (strain DSM 17167 / CIP 108236 / LMG 21445 / STM815) (Burkholderia phymatum).